The primary structure comprises 402 residues: Phosphopentomutase (402 aa).

Positions 10, 301, 306, 342, 343, and 354 each coordinate Mn(2+).

This sequence belongs to the phosphopentomutase family. Mn(2+) is required as a cofactor.

The protein localises to the cytoplasm. It catalyses the reaction 2-deoxy-alpha-D-ribose 1-phosphate = 2-deoxy-D-ribose 5-phosphate. It carries out the reaction alpha-D-ribose 1-phosphate = D-ribose 5-phosphate. The protein operates within carbohydrate degradation; 2-deoxy-D-ribose 1-phosphate degradation; D-glyceraldehyde 3-phosphate and acetaldehyde from 2-deoxy-alpha-D-ribose 1-phosphate: step 1/2. In terms of biological role, isomerase that catalyzes the conversion of deoxy-ribose 1-phosphate (dRib-1-P) and ribose 1-phosphate (Rib-1-P) to deoxy-ribose 5-phosphate (dRib-5-P) and ribose 5-phosphate (Rib-5-P), respectively. The polypeptide is Phosphopentomutase (Aeromonas hydrophila subsp. hydrophila (strain ATCC 7966 / DSM 30187 / BCRC 13018 / CCUG 14551 / JCM 1027 / KCTC 2358 / NCIMB 9240 / NCTC 8049)).